A 336-amino-acid chain; its full sequence is Foldase protein PrsA (336 aa).

The first 22 residues, 1–22, serve as a signal peptide directing secretion; that stretch reads MKSAKKLLSVLCLGIFILTFTA. C23 carries the N-palmitoyl cysteine lipid modification. A lipid anchor (S-diacylglycerol cysteine) is attached at C23. Residues 194–286 form the PpiC domain; it reads PNTMNVSHIL…WGYHIIKINS (93 aa).

Belongs to the PrsA family.

It localises to the cell membrane. It catalyses the reaction [protein]-peptidylproline (omega=180) = [protein]-peptidylproline (omega=0). Plays a major role in protein secretion by helping the post-translocational extracellular folding of several secreted proteins. This is Foldase protein PrsA from Clostridium botulinum (strain Langeland / NCTC 10281 / Type F).